We begin with the raw amino-acid sequence, 349 residues long: 4-hydroxy-3-methylbut-2-en-1-yl diphosphate synthase (flavodoxin) (349 aa).

Positions 264, 267, 299, and 306 each coordinate [4Fe-4S] cluster.

Belongs to the IspG family. [4Fe-4S] cluster serves as cofactor.

The catalysed reaction is (2E)-4-hydroxy-3-methylbut-2-enyl diphosphate + oxidized [flavodoxin] + H2O + 2 H(+) = 2-C-methyl-D-erythritol 2,4-cyclic diphosphate + reduced [flavodoxin]. Its pathway is isoprenoid biosynthesis; isopentenyl diphosphate biosynthesis via DXP pathway; isopentenyl diphosphate from 1-deoxy-D-xylulose 5-phosphate: step 5/6. Converts 2C-methyl-D-erythritol 2,4-cyclodiphosphate (ME-2,4cPP) into 1-hydroxy-2-methyl-2-(E)-butenyl 4-diphosphate. The chain is 4-hydroxy-3-methylbut-2-en-1-yl diphosphate synthase (flavodoxin) from Clostridium acetobutylicum (strain ATCC 824 / DSM 792 / JCM 1419 / IAM 19013 / LMG 5710 / NBRC 13948 / NRRL B-527 / VKM B-1787 / 2291 / W).